The chain runs to 179 residues: Protein YjaZ (179 aa).

The polypeptide is Protein YjaZ (Escherichia coli (strain K12)).